Here is an 888-residue protein sequence, read N- to C-terminus: Collagen alpha chain (888 aa).

The disordered stretch occupies residues 1–627 (APGPDGLTGT…GPPGQPGMSE (627 aa)). Positions 3–60 (GPDGLTGTKGSMGEPGTDGEPGSPGPQGAKGETGLAGRRGLTGIPGKQGRQGERGEPG) constitute a Collagen-like 1 domain. Composition is skewed to low complexity over residues 59–73 (PGTAGSQGQQGQPGT) and 148–164 (TPGLPGMPGQQGPMGPI). Residues 179-190 (RGYDGKDGEPGR) are compositionally biased toward basic and acidic residues. Low complexity predominate over residues 194-203 (PGPIGQPGIP). Residues 311–320 (SGPPGPPGPS) are compositionally biased toward pro residues. A compositionally biased stretch (low complexity) spans 422–440 (SGSRGAQGPPGAPGSSGQN). Residues 441-450 (GVDGGTGENG) are compositionally biased toward gly residues. Low complexity-rich tracts occupy residues 460–475 (ESGAPGDPGASGSAGP) and 508–518 (EPGPQGDQGPK). Positions 513–571 (GDQGPKGQKGEVGPVGEKGDKGWTGTPGDPGPQGDRGEPGPPGRDGVDGPPGPRGAPGE) constitute a Collagen-like 2 domain. Residues 610-622 (PPGPPGPPGPPGQ) show a composition bias toward pro residues. One can recognise a Fibrillar collagen NC1 domain in the interval 661–884 (ENVLKDLDEK…KLEIGPACFH (224 aa)). Intrachain disulfides connect Cys731–Cys882 and Cys793–Cys833.

The protein belongs to the fibrillar collagen family. As to expression, component of the acid-insoluble organic matrix of the aragonitic skeleton (at protein level).

Its subcellular location is the secreted. The chain is Collagen alpha chain from Acropora millepora (Staghorn coral).